Here is a 139-residue protein sequence, read N- to C-terminus: ATP synthase epsilon chain (139 aa).

This sequence belongs to the ATPase epsilon chain family. As to quaternary structure, F-type ATPases have 2 components, CF(1) - the catalytic core - and CF(0) - the membrane proton channel. CF(1) has five subunits: alpha(3), beta(3), gamma(1), delta(1), epsilon(1). CF(0) has three main subunits: a, b and c.

Its subcellular location is the cell inner membrane. Its function is as follows. Produces ATP from ADP in the presence of a proton gradient across the membrane. This chain is ATP synthase epsilon chain, found in Pectobacterium carotovorum subsp. carotovorum (strain PC1).